The primary structure comprises 96 residues: uncharacterized protein (96 aa).

Functionally, essential for virus function. This is an uncharacterized protein from Saccharolobus solfataricus (Sulfolobus solfataricus).